Here is a 421-residue protein sequence, read N- to C-terminus: GTPase Obg (421 aa).

An Obg domain is found at 1 to 158; it reads MFIDVAKIEL…KTIKLELKLL (158 aa). The disordered stretch occupies residues 21–40; sequence AFRREKYEPSGGPAGGDGGD. The OBG-type G domain occupies 159–328; it reads ADVGLIGLPN…LMYLIADTLD (170 aa). Residues 165–172, 190–194, 211–214, 281–284, and 309–311 contribute to the GTP site; these read GLPNVGKS, FTTLE, DIPG, NKTD, and SAA. Mg(2+) is bound by residues S172 and T192. Residues 344-421 form the OCT domain; that stretch reads FEEEKEPDFK…IGDVEFDFYE (78 aa).

Belongs to the TRAFAC class OBG-HflX-like GTPase superfamily. OBG GTPase family. In terms of assembly, monomer. Requires Mg(2+) as cofactor.

Its subcellular location is the cytoplasm. An essential GTPase which binds GTP, GDP and possibly (p)ppGpp with moderate affinity, with high nucleotide exchange rates and a fairly low GTP hydrolysis rate. Plays a role in control of the cell cycle, stress response, ribosome biogenesis and in those bacteria that undergo differentiation, in morphogenesis control. In Finegoldia magna (strain ATCC 29328 / DSM 20472 / WAL 2508) (Peptostreptococcus magnus), this protein is GTPase Obg.